Here is a 281-residue protein sequence, read N- to C-terminus: CDAN1-interacting nuclease 1 (281 aa).

T114 bears the Phosphothreonine mark.

It localises to the nucleus. The protein localises to the cytoplasm. Plays a role in erythroid cell differentiation. The polypeptide is CDAN1-interacting nuclease 1 (Homo sapiens (Human)).